The chain runs to 212 residues: GrpE protein homolog, mitochondrial (212 aa).

Belongs to the GrpE family. As to quaternary structure, component of the PAM complex, at least composed of mtHsp70, MGE1, TIM44, PAM16, PAM17 and PAM18.

Its subcellular location is the mitochondrion matrix. Functionally, essential component of the PAM complex, a complex required for the translocation of transit peptide-containing proteins from the inner membrane into the mitochondrial matrix in an ATP-dependent manner. Seems to control the nucleotide-dependent binding of SSC1 to substrate proteins. The polypeptide is GrpE protein homolog, mitochondrial (mge1) (Eremothecium gossypii (strain ATCC 10895 / CBS 109.51 / FGSC 9923 / NRRL Y-1056) (Yeast)).